The primary structure comprises 410 residues: Calsequestrin-2 (410 aa).

A signal peptide spans methionine 1–alanine 19. Residues methionine 221–lysine 242 form a calcium regulated hydrophobic site region. Tyrosine 282 carries the phosphotyrosine modification. N-linked (GlcNAc...) asparagine glycans are attached at residues asparagine 335 and asparagine 395. Residues aspartate 364–glutamate 410 are disordered. A compositionally biased stretch (acidic residues) spans glutamate 373–glutamate 410. Phosphoserine; by CK2 is present on residues serine 397, serine 401, and serine 405.

The protein belongs to the calsequestrin family. As to quaternary structure, interacts with ASPH. Monomer, homodimer and homooligomer. Mostly monomeric in the absence of calcium. Forms higher oligomers in a calcium-dependent manner. Dimers associate to form tetramers, that then form linear homomer chains. Interacts with TRDN. Post-translationally, phosphorylation in the C-terminus, probably by CK2, moderately increases calcium buffering capacity. N-glycosylated. In terms of tissue distribution, detected in heart muscle (at protein level).

The protein localises to the sarcoplasmic reticulum lumen. Functionally, calsequestrin is a high-capacity, moderate affinity, calcium-binding protein and thus acts as an internal calcium store in muscle. Calcium ions are bound by clusters of acidic residues at the protein surface, especially at the interface between subunits. Can bind around 60 Ca(2+) ions. Regulates the release of lumenal Ca(2+) via the calcium release channel RYR2; this plays an important role in triggering muscle contraction. Plays a role in excitation-contraction coupling in the heart and in regulating the rate of heart beats. The sequence is that of Calsequestrin-2 (CASQ2) from Canis lupus familiaris (Dog).